We begin with the raw amino-acid sequence, 284 residues long: MASLQRKGLQARILTSEEEEKLKRDQTLVSDFKQQKLEQEAQKNWDLFYKRNSTNFFKDRHWTTREFEELRSCREFEDQKLTMLEAGCGVGNCLFPLLEEDPNIFAYACDFSPRAIEYVKQNPLYDTERCKVFQCDLTKDDLLDHVPPESVDVVMLIFVLSAVHPDKMHLVLQNIYKVLKPGKSVLFRDYGLYDHAMLRFKASSKLGENFYVRQDGTRSYFFTDDFLAQLFMDTGYEEVVNEYVFRETVNKKEGLCVPRVFLQSKFLKPPKNPSPVVLGLDPKS.

Positions 45 and 49 each coordinate S-adenosyl-L-methionine. Residues tyrosine 49, histidine 61, glutamate 85, glycine 87, aspartate 110, aspartate 136, leucine 137, and isoleucine 157 each coordinate S-adenosyl-L-homocysteine. Residues glycine 87, aspartate 110, aspartate 136, leucine 137, and isoleucine 157 each contribute to the S-adenosyl-L-methionine site.

The protein belongs to the methyltransferase superfamily. METL family. As to quaternary structure, monomer. Interacts with SARS1/SerRS; interaction is mediated via tRNA(Ser) and is required for N(3)-methylcytidine methylation.

It localises to the cytoplasm. The protein localises to the nucleus. It carries out the reaction cytidine(32) in tRNA(Ser) + S-adenosyl-L-methionine = N(3)-methylcytidine(32) in tRNA(Ser) + S-adenosyl-L-homocysteine + H(+). Its function is as follows. S-adenosyl-L-methionine-dependent methyltransferase that mediates N(3)-methylcytidine modification of residue 32 of the tRNA anticodon loop of tRNA(Ser), including tRNA(Ser)(UGA) and tRNA(Ser)(GCU). Interaction with SARS1/SerRS is required for N(3)-methylcytidine methylation. The polypeptide is tRNA N(3)-cytidine methyltransferase METTL6 (Homo sapiens (Human)).